A 609-amino-acid chain; its full sequence is MCGIVGAIAGRDVVPVLIEGLKRLEYRGYDSSGIAVLDGTQVRRVRRTGRVAEMAQAAQAEQFGATLGIGHTRWATHGGVTEANAHPHISAGVALVHNGIIENHEEQREKLRALGYTFESQTDTEVIAHLIHHHLADAGDLLSALQRTVKELTGAYALAVMSQAEQERFVCARMGCPLLIGVGEGENFVASDVSAIVQATRQVIFLEEGDTAELRRDGVRVFDASDAAVERPLHLSDVSLASLELGPFRHFMQKEIHEQPRALADTIEAAIDAKGFPASLFGPTADAVLRDIEGVQILACGTSYYAGLTARYWIEAIAGLPCSVEIASEYRYRAAYANPKHLIVTISQSGETLDTMEALKYAKSLGHLHTLSICNVPESAIPRASELVCYTRAGAEIGVASTKAFTTQLAVLFQLTMVLGKLQGRISDSEEADYLEQLRFLPGSVQHALNLEPQIMAWAERFSPKENALFLGRGLHYPIALEGALKLKEISYIHAEAYPAGELKHGPLALVDATMPVVVIAPNDRLLEKVKSNMQEVRARGGELFVFADQDSHFSESDGVHVIRTPRHAGVLSPVIHTIPVQLLAYHTALARGTDVDKPRNLAKSVTVE.

Cys2 serves as the catalytic Nucleophile; for GATase activity. A Glutamine amidotransferase type-2 domain is found at 2–217 (CGIVGAIAGR…EGDTAELRRD (216 aa)). SIS domains follow at residues 284–425 (TADA…LQGR) and 458–599 (WAER…VDKP). The active-site For Fru-6P isomerization activity is the Lys604.

As to quaternary structure, homodimer.

The protein resides in the cytoplasm. It carries out the reaction D-fructose 6-phosphate + L-glutamine = D-glucosamine 6-phosphate + L-glutamate. Catalyzes the first step in hexosamine metabolism, converting fructose-6P into glucosamine-6P using glutamine as a nitrogen source. The sequence is that of Glutamine--fructose-6-phosphate aminotransferase [isomerizing] from Xanthomonas campestris pv. campestris (strain ATCC 33913 / DSM 3586 / NCPPB 528 / LMG 568 / P 25).